The following is a 355-amino-acid chain: Protein FIP1 (355 aa).

Helical transmembrane passes span 42–62 (YLYM…PWMF), 72–92 (LLCC…QYFV), 113–133 (VVRL…LVIV), and 149–169 (IIML…IGYV). Positions 220 to 337 (LHFLSEEILC…RMSNSELQKE (118 aa)) form a coiled coil. The span at 331 to 340 (NSELQKEVAS) shows a compositional bias: basic and acidic residues. The interval 331–355 (NSELQKEVASTRRKQMLETTTSEQP) is disordered.

Belongs to the TMEM192 family. As to quaternary structure, interacts with FRI.

It is found in the membrane. This is Protein FIP1 from Arabidopsis thaliana (Mouse-ear cress).